The sequence spans 149 residues: 2S seed storage albumin protein (149 aa).

Positions 1–22 (MKLFIILATATLLIAATQAKYL) are cleaved as a signal peptide. 4 cysteine pairs are disulfide-bonded: C38–C98, C52–C87, C88–C133, and C100–C140. No IgE-binding stretches follow at residues 41 to 53 (QVKM…VKCN), 68 to 81 (ALSR…ESEE), 84 to 95 (LRGCCVAMKEME), and 97 to 105 (ECVCEWMKM). The igE-binding stretch occupies residues 108-117 (ENQKGRIGET). A no IgE-binding region spans residues 121–131 (KGIRDLKELPN). Residues 132–141 (KCGISEMECH) are igE-binding.

The protein belongs to the 2S seed storage albumins family. Expressed in seeds (at protein level). Expressed in seeds.

Functionally, seed storage protein. The sequence is that of 2S seed storage albumin protein from Fagopyrum tataricum (Tartarian buckwheat).